Here is a 215-residue protein sequence, read N- to C-terminus: Cytochrome b6 (215 aa).

Residues 32 to 52 traverse the membrane as a helical segment; it reads IFYCLGGITLTCFLVQVATGF. Position 35 (Cys35) interacts with heme c. Heme b-binding residues include His86 and His100. 3 helical membrane passes run 90 to 110, 116 to 136, and 186 to 206; these read ASMM…TGGF, LTWV…VTGY, and LHTF…FPMI. Heme b is bound by residues His187 and His202.

The protein belongs to the cytochrome b family. PetB subfamily. As to quaternary structure, the 4 large subunits of the cytochrome b6-f complex are cytochrome b6, subunit IV (17 kDa polypeptide, PetD), cytochrome f and the Rieske protein, while the 4 small subunits are PetG, PetL, PetM and PetN. The complex functions as a dimer. It depends on heme b as a cofactor. The cofactor is heme c.

The protein localises to the plastid. It is found in the chloroplast thylakoid membrane. Functionally, component of the cytochrome b6-f complex, which mediates electron transfer between photosystem II (PSII) and photosystem I (PSI), cyclic electron flow around PSI, and state transitions. The polypeptide is Cytochrome b6 (Agrostis stolonifera (Creeping bentgrass)).